We begin with the raw amino-acid sequence, 1597 residues long: THO complex subunit 2 (1597 aa).

2 disordered regions span residues 1250–1274 (KSQR…SKDR) and 1384–1597 (EPYP…RYQR). The span at 1419–1430 (GSSNYRGPSNDR) shows a compositional bias: polar residues. 4 stretches are compositionally biased toward basic and acidic residues: residues 1458 to 1490 (TYND…EYKK), 1500 to 1512 (FPEK…KDSS), 1522 to 1545 (YKRD…ETIR), and 1554 to 1567 (RNTR…RANE). Over residues 1568–1582 (NQRYNGNRKSNTQAL) the composition is skewed to polar residues.

The protein belongs to the THOC2 family. As to quaternary structure, component of the THO complex, which is composed of HPR1, MFT1, THO2 and THP2. Together with SUB2, TEX1 and YRA1, THO forms the transcription/export (TREX) complex. THO associates with DNA and RNA in vitro.

It localises to the nucleus. Its function is as follows. Component the THO subcomplex of the TREX complex, which operates in coupling transcription elongation to mRNA export. The THO complex is recruited to transcribed genes and moves along the gene with the elongating polymerase during transcription. THO is important for stabilizing nascent RNA in the RNA polymerase II elongation complex by preventing formation of DNA:RNA hybrids behind the elongating polymerase. It functions in cotranscriptional formation of an export-competent messenger ribonucleoprotein particle (mRNP) by facilitating the loading of ATP-dependent RNA helicase SUB2 and the mRNA export factor YRA1 along the nascent mRNA. The chain is THO complex subunit 2 (THO2) from Saccharomyces cerevisiae (strain ATCC 204508 / S288c) (Baker's yeast).